Here is a 386-residue protein sequence, read N- to C-terminus: Succinate--CoA ligase [ADP-forming] subunit beta (386 aa).

The 236-residue stretch at 9-244 (KDLLTSYQLP…PSQENIRDVL (236 aa)) folds into the ATP-grasp domain. ATP is bound by residues lysine 46, 53 to 55 (GRG), valine 102, and glutamate 107. Mg(2+) is bound by residues asparagine 199 and aspartate 213. Residues asparagine 264 and 321 to 323 (GIM) contribute to the substrate site.

Belongs to the succinate/malate CoA ligase beta subunit family. In terms of assembly, heterotetramer of two alpha and two beta subunits. Mg(2+) is required as a cofactor.

It carries out the reaction succinate + ATP + CoA = succinyl-CoA + ADP + phosphate. The catalysed reaction is GTP + succinate + CoA = succinyl-CoA + GDP + phosphate. It functions in the pathway carbohydrate metabolism; tricarboxylic acid cycle; succinate from succinyl-CoA (ligase route): step 1/1. Functionally, succinyl-CoA synthetase functions in the citric acid cycle (TCA), coupling the hydrolysis of succinyl-CoA to the synthesis of either ATP or GTP and thus represents the only step of substrate-level phosphorylation in the TCA. The beta subunit provides nucleotide specificity of the enzyme and binds the substrate succinate, while the binding sites for coenzyme A and phosphate are found in the alpha subunit. This is Succinate--CoA ligase [ADP-forming] subunit beta from Chlamydia muridarum (strain MoPn / Nigg).